The sequence spans 557 residues: MPKEKYEPPDPRRMYTIMSSEEAANGKKSHWAELEISGKVRSLSASLWSLTHLTALHLSDNSLSRIPSDIAKLHNLVYLDLSSNKIRSLPAELGNMVSLRELHLNNNLLRVLPFELGKLFQLQTLGLKGNPLTQDILNLYQEPDGTRRLLNYLLDNLSGTAKRITTEQPPPRSWIMLQEPDRTRPTALFSVMCYNVLCDKYATRQLYGYCPSWALNWDYRKKAIIQEILSCNADIVSLQEVETEQYYSFFLVELKERGYNGFFSPKSRARTMSEQERKHVDGCAIFFKTEKFTLVQKHTVEFNQLAMANSEGSEAMLNRVMTKDNIGVAVLLELRKESIEMPSGKPHLGTEKQLILVANAHMHWDPEYSDVKLVQTMMFLSEVKNIIDKASRNLKSSVLGEFGTIPLVLCADLNSLPDSGVVEYLSTGGVETNHKDFKELRYNESLTNFSCHGKNGTTNGRITHGFKLQSAYESGLMPYTNYTFDFKGIIDYIFYSKPQLNTLGILGPLDHHWLVENNISGCPHPLIPSDHFSLFAQLELLLPFLPQVNGIHLPGRR.

LRR repeat units lie at residues 52–73 (HLTA…IAKL), 75–96 (NLVY…LGNM), 98–120 (SLRE…GKLF), and 121–143 (QLQT…YQEP). Positions 153–557 (LLDNLSGTAK…VNGIHLPGRR (405 aa)) are nuclease domain. Residue E240 participates in Mg(2+) binding. The substrate site is built by E240, E276, H361, and P366. D412 is a binding site for Mg(2+). Catalysis depends on D412, which acts as the Proton donor/acceptor. Substrate-binding residues include N414, N481, and F486.

The protein belongs to the CCR4/nocturin family. As to quaternary structure, component of the CCR4-NOT complex; distinct complexes seem to exist that differ in the participation of probably mutually exclusive catalytic subunits; the complex contains two deadenylase subunits, CNOT6 or CNOT6L, and CNOT7 or CNOT8. Interacts with CNOT7 and CNOT8. Interacts with UNR. Interacts with ZFP36L1 (via N-terminus). Interacts with ZNF335. Requires Mg(2+) as cofactor.

It is found in the cytoplasm. The protein resides in the nucleus. The catalysed reaction is Exonucleolytic cleavage of poly(A) to 5'-AMP.. In terms of biological role, poly(A) nuclease with 3'-5' RNase activity. Catalytic component of the CCR4-NOT complex which is one of the major cellular mRNA deadenylases and is linked to various cellular processes including bulk mRNA degradation, miRNA-mediated repression, translational repression during translational initiation and general transcription regulation. Additional complex functions may be a consequence of its influence on mRNA expression. Involved in mRNA decay mediated by the major-protein-coding determinant of instability (mCRD) of the FOS gene in the cytoplasm. In the presence of ZNF335, enhances ligand-dependent transcriptional activity of nuclear hormone receptors, including RARA. The increase of ligand-dependent ESR1-mediated transcription is much smaller, if any. Mediates cell proliferation and cell survival and prevents cellular senescence. This is CCR4-NOT transcription complex subunit 6 (CNOT6) from Homo sapiens (Human).